Consider the following 171-residue polypeptide: Small ribosomal subunit protein mS41 (171 aa).

The N-terminal 23 residues, Met1–Gln23, are a transit peptide targeting the mitochondrion. Residues Arg122–Leu141 are disordered.

This sequence belongs to the mitochondrion-specific ribosomal protein mS41 family.

The protein localises to the mitochondrion. Its function is as follows. Involved in telomere length regulation. This chain is Small ribosomal subunit protein mS41 (FYV4), found in Scheffersomyces stipitis (strain ATCC 58785 / CBS 6054 / NBRC 10063 / NRRL Y-11545) (Yeast).